A 73-amino-acid chain; its full sequence is Translation initiation factor IF-1 (73 aa).

The 72-residue stretch at 1–72 folds into the S1-like domain; that stretch reads MAKEDHIEMA…SKGRIIFRDK (72 aa).

This sequence belongs to the IF-1 family. As to quaternary structure, component of the 30S ribosomal translation pre-initiation complex which assembles on the 30S ribosome in the order IF-2 and IF-3, IF-1 and N-formylmethionyl-tRNA(fMet); mRNA recruitment can occur at any time during PIC assembly.

The protein localises to the cytoplasm. Its function is as follows. One of the essential components for the initiation of protein synthesis. Stabilizes the binding of IF-2 and IF-3 on the 30S subunit to which N-formylmethionyl-tRNA(fMet) subsequently binds. Helps modulate mRNA selection, yielding the 30S pre-initiation complex (PIC). Upon addition of the 50S ribosomal subunit IF-1, IF-2 and IF-3 are released leaving the mature 70S translation initiation complex. This is Translation initiation factor IF-1 from Legionella pneumophila (strain Paris).